We begin with the raw amino-acid sequence, 436 residues long: 3-ketoacyl-CoA thiolase (436 aa).

The active-site Acyl-thioester intermediate is cysteine 99. Active-site proton acceptor residues include histidine 392 and cysteine 422.

It belongs to the thiolase-like superfamily. Thiolase family. In terms of assembly, heterotetramer of two alpha chains (FadJ) and two beta chains (FadI).

The protein localises to the cytoplasm. It carries out the reaction an acyl-CoA + acetyl-CoA = a 3-oxoacyl-CoA + CoA. It participates in lipid metabolism; fatty acid beta-oxidation. Its function is as follows. Catalyzes the final step of fatty acid oxidation in which acetyl-CoA is released and the CoA ester of a fatty acid two carbons shorter is formed. This Escherichia coli O1:K1 / APEC protein is 3-ketoacyl-CoA thiolase.